Reading from the N-terminus, the 597-residue chain is Arginine--tRNA ligase (597 aa).

The short motif at 125-135 (PNTNKPLHLGH) is the 'HIGH' region element.

It belongs to the class-I aminoacyl-tRNA synthetase family. Monomer.

It is found in the cytoplasm. It catalyses the reaction tRNA(Arg) + L-arginine + ATP = L-arginyl-tRNA(Arg) + AMP + diphosphate. The polypeptide is Arginine--tRNA ligase (Parabacteroides distasonis (strain ATCC 8503 / DSM 20701 / CIP 104284 / JCM 5825 / NCTC 11152)).